The following is a 134-amino-acid chain: MRALPICLVALMLSGCSMLSRSPVEPVQSTAPQPKAEPAKPKAPRATPVRIYTNAEELVGKPFRDLGEVSGDSCQASNQDSPPSIPTARKRMQINASKMKANAVLLHSCEVTSGTPGCYRQAVCIGSALNITAK.

The first 15 residues, 1-15, serve as a signal peptide directing secretion; it reads MRALPICLVALMLSG. C16 is lipidated: N-palmitoyl cysteine. The S-diacylglycerol cysteine moiety is linked to residue C16. Disordered regions lie at residues 22–48 and 67–88; these read SPVEPVQSTAPQPKAEPAKPKAPRATP and GEVSGDSCQASNQDSPPSIPTA. The segment covering 72–82 has biased composition (polar residues); sequence DSCQASNQDSP. Intrachain disulfides connect C74/C118 and C109/C124.

This sequence belongs to the RcsF family.

Its subcellular location is the cell outer membrane. Functionally, essential component of the Rcs signaling system, which controls transcription of numerous genes. Plays a role in signal transduction from the cell surface to the histidine kinase RcsC. May detect outer membrane defects. The chain is Outer membrane lipoprotein RcsF from Escherichia coli O6:H1 (strain CFT073 / ATCC 700928 / UPEC).